Here is a 594-residue protein sequence, read N- to C-terminus: Isocitrate dehydrogenase kinase/phosphatase (594 aa).

ATP-binding positions include 315–321 (APGIRGM) and lysine 336. The active site involves aspartate 371.

This sequence belongs to the AceK family.

The protein resides in the cytoplasm. The catalysed reaction is L-seryl-[isocitrate dehydrogenase] + ATP = O-phospho-L-seryl-[isocitrate dehydrogenase] + ADP + H(+). Functionally, bifunctional enzyme which can phosphorylate or dephosphorylate isocitrate dehydrogenase (IDH) on a specific serine residue. This is a regulatory mechanism which enables bacteria to bypass the Krebs cycle via the glyoxylate shunt in response to the source of carbon. When bacteria are grown on glucose, IDH is fully active and unphosphorylated, but when grown on acetate or ethanol, the activity of IDH declines drastically concomitant with its phosphorylation. The chain is Isocitrate dehydrogenase kinase/phosphatase from Klebsiella pneumoniae (strain 342).